Here is a 283-residue protein sequence, read N- to C-terminus: 4-diphosphocytidyl-2-C-methyl-D-erythritol kinase (283 aa).

The active site involves Lys-13. 96–106 (PMGGGIGGGSS) contributes to the ATP binding site. Residue Asp-138 is part of the active site.

The protein belongs to the GHMP kinase family. IspE subfamily.

The catalysed reaction is 4-CDP-2-C-methyl-D-erythritol + ATP = 4-CDP-2-C-methyl-D-erythritol 2-phosphate + ADP + H(+). The protein operates within isoprenoid biosynthesis; isopentenyl diphosphate biosynthesis via DXP pathway; isopentenyl diphosphate from 1-deoxy-D-xylulose 5-phosphate: step 3/6. Its function is as follows. Catalyzes the phosphorylation of the position 2 hydroxy group of 4-diphosphocytidyl-2C-methyl-D-erythritol. This is 4-diphosphocytidyl-2-C-methyl-D-erythritol kinase from Pseudomonas fluorescens (strain Pf0-1).